A 715-amino-acid polypeptide reads, in one-letter code: L-type lectin-domain containing receptor kinase VIII.1 (715 aa).

Positions 1–21 (MSLFLSFFISILLCFFNGATT) are cleaved as a signal peptide. A legume-lectin like region spans residues 22 to 247 (TQFDFSTLAI…IHSIEWWSFS (226 aa)). Topologically, residues 22 to 317 (TQFDFSTLAI…SRFCKENPGT (296 aa)) are extracellular. N126 and N195 each carry an N-linked (GlcNAc...) asparagine glycan. Positions 255–296 (GSGSGSPPPRANLMNPKANSVKSPPPLASQPSSSAIPISSNT) are disordered. Low complexity predominate over residues 283–296 (SQPSSSAIPISSNT). A helical transmembrane segment spans residues 318 to 338 (IAGVVTAGAFFLALFAGALFW). Residues 339–715 (VYSKKFKRVE…IIRSDDDHLV (377 aa)) are Cytoplasmic-facing. In terms of domain architecture, Protein kinase spans 376–676 (FNESRIIGHG…MSFSTSHLLL (301 aa)). Residues 382 to 390 (IGHGAFGVV) and K405 each bind ATP. The Proton acceptor role is filled by D500.

It in the C-terminal section; belongs to the protein kinase superfamily. Ser/Thr protein kinase family. The protein in the N-terminal section; belongs to the leguminous lectin family.

Its subcellular location is the cell membrane. It catalyses the reaction L-seryl-[protein] + ATP = O-phospho-L-seryl-[protein] + ADP + H(+). It carries out the reaction L-threonyl-[protein] + ATP = O-phospho-L-threonyl-[protein] + ADP + H(+). This Arabidopsis thaliana (Mouse-ear cress) protein is L-type lectin-domain containing receptor kinase VIII.1 (LECRK81).